A 1092-amino-acid polypeptide reads, in one-letter code: Myelin regulatory factor (1092 aa).

At 1–730 (MDVEDENETL…CVSQRFLQAT (730 aa)) the chain is on the cytoplasmic side. Disordered stretches follow at residues 145-168 (SYAAGTLPDSPPDSGSEAYSPQQL), 187-210 (PPSRLEHPPPPHLQGPLPPHSIHQ), and 258-282 (QQHGAELPVHPSKKRKHSDSPTNTL). A compositionally biased stretch (pro residues) spans 196–205 (PPHLQGPLPP). The NDT80 DNA-binding region spans 246-507 (AQQSQMLHQL…SNPGQFESDS (262 aa)). Residues 553–662 (SDIRAKESVE…KLTDNLETRI (110 aa)) form the Peptidase S74 domain. Residues 646–677 (GAVKELCKLTDNLETRIDELERWSHKLAKLRR) are a coiled coil. The segment covering 681-695 (MKSTNSHTGSSQFSR) has biased composition (polar residues). Residues 681-714 (MKSTNSHTGSSQFSRAGSVPYKQRPPKVMGKTVP) form a disordered region. The helical transmembrane segment at 731–751 (IIALVIIMAFSVISMTTLYVL) threads the bilayer. Residues 752-1092 (NLRSEDDMLG…YYFRFYRLCD (341 aa)) lie on the Lumenal side of the membrane. Disordered stretches follow at residues 798-817 (TTQLKGNTTPPPKITKSPDW) and 849-945 (ITRK…DSRY). Composition is skewed to polar residues over residues 849–867 (ITRKTSAASAETISQTDPA) and 928–945 (TPITPMDRTQGNSNDSRY). N-linked (GlcNAc...) asparagine glycosylation is found at N941, N961, N974, and N996.

The protein belongs to the MRF family. In terms of assembly, homotrimer. Follows autocatalytic cleavage via the peptidase S74 domain. Autoprocessing is apparently constitutive and is essential for transcriptional activity.

It localises to the endoplasmic reticulum membrane. Its subcellular location is the nucleus. The protein resides in the cytoplasm. Its function is as follows. Constitutes a precursor of the transcription factor. Mediates the autocatalytic cleavage that releases the Myelin regulatory factor, N-terminal component that specifically activates transcription of central nervous system (CNS) myelin genes. Functionally, membrane-bound part that has no transcription factor activity and remains attached to the endoplasmic reticulum membrane following cleavage. Transcription factor that specifically activates expression of myelin genes during oligodendrocyte (OL) maturation, thereby playing a central role in oligodendrocyte maturation and CNS myelination. This chain is Myelin regulatory factor (myrf), found in Xenopus laevis (African clawed frog).